A 785-amino-acid polypeptide reads, in one-letter code: SUN domain-containing protein 1 (785 aa).

Residues 1-138 form an LMNA-binding region; sequence MDFSRLHMYS…TRRPPVLDES (138 aa). At 1 to 288 the chain is on the nuclear side; sequence MDFSRLHMYS…VFLLTRCLRN (288 aa). Phosphoserine is present on residues Ser48, Ser100, and Ser138. Residue Lys195 forms a Glycyl lysine isopeptide (Lys-Gly) (interchain with G-Cter in SUMO2) linkage. Positions 209–309 are SYNE2-binding; that stretch reads SRVYSRDRNQ…FLLLAGLSLR (101 aa). The segment at 223–309 is EMD-binding; the sequence is LLQILRRIGA…FLLLAGLSLR (87 aa). A helical transmembrane segment spans residues 289 to 308; it reads ICKFLVLLIPLFLLLAGLSL. Topologically, residues 309–785 are perinuclear space; the sequence is RGQGNFFSFL…RFRVHGEPVK (477 aa). A phosphoserine mark is found at Asp333 and Ser344. Positions 428–495 form a coiled coil; that stretch reads HQEHEVRMSH…KSELSSWRHV (68 aa). Residues 574–785 form a sufficient for interaction with SYNE1 and SYNE2 region; the sequence is TSEAVVSAVS…RFRVHGEPVK (212 aa). The SUN domain maps to 622–784; that stretch reads GGSILSTRCS…YRFRVHGEPV (163 aa).

As to quaternary structure, core component of the LINC complex which is composed of inner nuclear membrane SUN domain-containing proteins coupled to outer nuclear membrane KASH domain-containing nesprins. SUN and KASH domain-containing proteins seem to bind each other promiscuously; however, differentially expression of LINC complex constituents is giving rise to specific assemblies. At least SUN1/2-containing core LINC complexes are proposed to be hexameric composed of three protomers of each KASH and SUN domain-containing protein. Interacts with KASH5 (via the last 22 amino acids); this interaction mediates KASH5 telomere localization by forming a SUN1:KASH5 LINC complex. May interact with SYNE3. Interacts with SYNE2 and SYNE1; probably forming respective LINC complexes. Interacts with A-type lamin with a strong preference for unprocessed A-type lamin compared with the mature protein. Interaction with lamins B1 and C is hardly detectable. Interacts with NAT10. Interacts with EMD and TSNAX. Associates with the nuclear pore complex (NPC). Interacts with CCDC79/TERB1; promoting the accumulation of the LINC complex complexes at the telomere-nuclear envelope attachment sites. Interacts (via KASH domain) with TMEM258. The disulfide bond with KASH domain-containing nesprins is required for stability of the respective LINC complexes under tensile forces.

The protein localises to the nucleus inner membrane. Functionally, as a component of the LINC (LInker of Nucleoskeleton and Cytoskeleton) complex involved in the connection between the nuclear lamina and the cytoskeleton. The nucleocytoplasmic interactions established by the LINC complex play an important role in the transmission of mechanical forces across the nuclear envelope and in nuclear movement and positioning. Required for interkinetic nuclear migration (INM) and essential for nucleokinesis and centrosome-nucleus coupling during radial neuronal migration in the cerebral cortex and during glial migration. Involved in telomere attachment to nuclear envelope in the prophase of meiosis implicating a SUN1/2:KASH5 LINC complex in which SUN1 and SUN2 seem to act at least partial redundantly. Required for gametogenesis and involved in selective gene expression of coding and non-coding RNAs needed for gametogenesis. Helps to define the distribution of nuclear pore complexes (NPCs). Required for efficient localization of SYNE4 in the nuclear envelope. May be involved in nuclear remodeling during sperm head formation in spermatogenesis. May play a role in DNA repair by suppressing non-homologous end joining repair to facilitate the repair of DNA cross-links. The polypeptide is SUN domain-containing protein 1 (Homo sapiens (Human)).